The sequence spans 361 residues: Phenylalanine 4-monooxygenase, chloroplastic (361 aa).

The transit peptide at 1-55 (MLALRQGALLLSARGGQTTHDNLQLCAGPSRRPRARWISSAPRPSTLVERHIRPQ) directs the protein to the chloroplast. The tract at residues 47–67 (LVERHIRPQASTASDATTSTS) is disordered. The segment covering 56–67 (ASTASDATTSTS) has biased composition (low complexity). Fe cation is bound by residues histidine 227, histidine 232, and glutamate 272.

This sequence belongs to the biopterin-dependent aromatic amino acid hydroxylase family. The cofactor is Fe(2+).

It is found in the plastid. The protein resides in the chloroplast. The catalysed reaction is (6R)-L-erythro-5,6,7,8-tetrahydrobiopterin + L-phenylalanine + O2 = (4aS,6R)-4a-hydroxy-L-erythro-5,6,7,8-tetrahydrobiopterin + L-tyrosine. Catalyzes the hydroxylation of L-phenylalanine to L-tyrosine. Can functionally complement an Escherichia coli tyrosine auxotroph. The protein is Phenylalanine 4-monooxygenase, chloroplastic of Chlamydomonas reinhardtii (Chlamydomonas smithii).